We begin with the raw amino-acid sequence, 302 residues long: Sushi domain-containing protein 6 (302 aa).

The signal sequence occupies residues 1–39; it reads MCHGKIAPKSSSEFVVTSVGHGVFLQLVILCALLGDGLA. The 65-residue stretch at 40-104 folds into the Sushi domain; the sequence is SVCPLPPEPE…TPAMEVSCHL (65 aa). 2 cysteine pairs are disulfide-bonded: Cys-42–Cys-89 and Cys-74–Cys-102. Residues 120 to 140 traverse the membrane as a helical segment; the sequence is IVASTASSVALILLLVVLFVL. Disordered stretches follow at residues 202–241 and 256–302; these read GSAPSGRNMPREQQLQGQEACSSAGGEDEAPGHSGLCEAW and TSSW…LKEA. 3 stretches are compositionally biased toward polar residues: residues 212 to 222, 256 to 267, and 279 to 290; these read REQQLQGQEAC, TSSWVAGSGSSR, and SDIQSLLSLTSE.

The protein resides in the membrane. In terms of biological role, may play a role in growth-suppressive activity and cell death. May be involved in the production of chemokine molecules in umbilical vein endothelial cells (HUVECs) cultured in THP1 monocyte LPS-induced medium. Plays a role in preventing tumor onset. The chain is Sushi domain-containing protein 6 from Mus musculus (Mouse).